A 219-amino-acid polypeptide reads, in one-letter code: Interleukin-6 (219 aa).

Positions 1-20 (MNSSTRYLSLLSALVVLVKG) are cleaved as a signal peptide. A disulfide bridge links C103 with C111.

This sequence belongs to the IL-6 superfamily. As to quaternary structure, component of a hexamer of two molecules each of IL6, IL6R and IL6ST; first binds to IL6R to associate with the signaling subunit IL6ST. In terms of tissue distribution, expressed in spleen, gill and gastrointestinal tract, ovary and brain. Highest expression in ovary.

It is found in the secreted. Cytokine with a wide variety of biological functions in immunity, tissue regeneration, and metabolism. Binds to IL6R, then the complex associates to the signaling subunit IL6ST/gp130 to trigger the intracellular IL6-signaling pathway. The interaction with the membrane-bound IL6R and IL6ST stimulates 'classic signaling', whereas the binding of IL6 and soluble IL6R to IL6ST stimulates 'trans-signaling'. Alternatively, 'cluster signaling' occurs when membrane-bound IL6:IL6R complexes on transmitter cells activate IL6ST receptors on neighboring receiver cells. The sequence is that of Interleukin-6 (il6) from Oncorhynchus mykiss (Rainbow trout).